A 418-amino-acid chain; its full sequence is Alditol oxidase (418 aa).

The FAD-binding PCMH-type domain occupies 13 to 179 (ITYTAKELLR…TSLTLDLEPA (167 aa)). FAD-binding positions include 41-47 (VLGSGHS), S106, S111, G114, 118-121 (TGTH), and V169. H46 bears the Pros-8alpha-FAD histidine mark. Position 106 (S106) interacts with D-sorbitol. S106 contacts xylitol. The D-sorbitol site is built by E320, R322, and T345. Residues E320, R322, and T345 each coordinate xylitol. Residue R322 coordinates FAD. H372 is an FAD binding site. A D-sorbitol-binding site is contributed by K375. K375 is a xylitol binding site.

The protein belongs to the oxygen-dependent FAD-linked oxidoreductase family. As to quaternary structure, monomer. FAD is required as a cofactor.

It catalyses the reaction an alditol + O2 = an aldose + H2O2. The catalysed reaction is xylitol + O2 = D-xylose + H2O2. It carries out the reaction D-sorbitol + O2 = D-glucose + H2O2. Oxidase that performs selective oxidation of the terminal primary hydroxyl group of several alditols, with a reduction of O2 to H2O2. Shows highest activity on xylitol and D-sorbitol, and a poor efficiency with D-mannitol and L-threitol. The chain is Alditol oxidase (xyoA) from Streptomyces coelicolor (strain ATCC BAA-471 / A3(2) / M145).